A 293-amino-acid chain; its full sequence is Undecaprenyl-diphosphatase (293 aa).

The next 7 membrane-spanning stretches (helical) occupy residues 3–23, 43–63, 85–105, 109–129, 203–223, 238–258, and 269–289; these read IALA…EFLP, KGKI…CWEF, LNVI…GKAI, LFNP…ILWA, VATE…TVYE, IFGI…RWLL, and FAWY…THLI.

This sequence belongs to the UppP family.

It is found in the cell inner membrane. The catalysed reaction is di-trans,octa-cis-undecaprenyl diphosphate + H2O = di-trans,octa-cis-undecaprenyl phosphate + phosphate + H(+). Functionally, catalyzes the dephosphorylation of undecaprenyl diphosphate (UPP). Confers resistance to bacitracin. The sequence is that of Undecaprenyl-diphosphatase from Ralstonia nicotianae (strain ATCC BAA-1114 / GMI1000) (Ralstonia solanacearum).